The sequence spans 81 residues: Photosystem I iron-sulfur center (81 aa).

4Fe-4S ferredoxin-type domains are found at residues Ser-2 to Trp-31 and Ile-39 to Tyr-68. The [4Fe-4S] cluster site is built by Cys-11, Cys-14, Cys-17, Cys-21, Cys-48, Cys-51, Cys-54, and Cys-58.

As to quaternary structure, the eukaryotic PSI reaction center is composed of at least 11 subunits. It depends on [4Fe-4S] cluster as a cofactor.

Its subcellular location is the plastid. The protein localises to the chloroplast thylakoid membrane. The catalysed reaction is reduced [plastocyanin] + hnu + oxidized [2Fe-2S]-[ferredoxin] = oxidized [plastocyanin] + reduced [2Fe-2S]-[ferredoxin]. Functionally, apoprotein for the two 4Fe-4S centers FA and FB of photosystem I (PSI); essential for photochemical activity. FB is the terminal electron acceptor of PSI, donating electrons to ferredoxin. The C-terminus interacts with PsaA/B/D and helps assemble the protein into the PSI complex. Required for binding of PsaD and PsaE to PSI. PSI is a plastocyanin/cytochrome c6-ferredoxin oxidoreductase, converting photonic excitation into a charge separation, which transfers an electron from the donor P700 chlorophyll pair to the spectroscopically characterized acceptors A0, A1, FX, FA and FB in turn. The chain is Photosystem I iron-sulfur center from Ostreococcus tauri.